The primary structure comprises 98 residues: NADH-ubiquinone oxidoreductase chain 4L (98 aa).

3 helical membrane-spanning segments follow: residues 2–22 (PPIF…TLIF), 29–49 (SLLC…LIIL), and 61–81 (ILLL…LVMV).

The protein belongs to the complex I subunit 4L family. In terms of assembly, core subunit of respiratory chain NADH dehydrogenase (Complex I) which is composed of 45 different subunits.

It localises to the mitochondrion inner membrane. It carries out the reaction a ubiquinone + NADH + 5 H(+)(in) = a ubiquinol + NAD(+) + 4 H(+)(out). Functionally, core subunit of the mitochondrial membrane respiratory chain NADH dehydrogenase (Complex I) which catalyzes electron transfer from NADH through the respiratory chain, using ubiquinone as an electron acceptor. Part of the enzyme membrane arm which is embedded in the lipid bilayer and involved in proton translocation. The protein is NADH-ubiquinone oxidoreductase chain 4L (MT-ND4L) of Avahi unicolor (Sambirano woolly lemur).